The chain runs to 624 residues: Phragmoplastin DRP1E (624 aa).

N-acetylthreonine is present on T2. The Dynamin-type G domain maps to 37–306 (WEALPTVAVV…LESVIRTRIP (270 aa)). Positions 47–54 (GGQSSGKS) are G1 motif. 50–55 (SSGKSS) provides a ligand contact to GTP. The segment at 73-75 (VTR) is G2 motif. The G3 motif stretch occupies residues 148-151 (DLPG). Residues 217-220 (TKLD) are G4 motif. GTP contacts are provided by residues 218–223 (KLDLMD) and 248–251 (NRSQ). Residues 247–250 (VNRS) form a G5 motif region. One can recognise a GED domain in the interval 532-624 (FRRIASNVSA…DEIDAVAWVR (93 aa)).

The protein belongs to the TRAFAC class dynamin-like GTPase superfamily. Dynamin/Fzo/YdjA family. As to quaternary structure, forms homodimer and may homooligomerize and heterooligomerize to form the phragmoplastin complex. Binds to PHIP1. As to expression, ubiquitous.

Its subcellular location is the cytoplasm. The protein resides in the cytoskeleton. It is found in the phragmoplast. It carries out the reaction GTP + H2O = GDP + phosphate + H(+). Functionally, microtubule-associated force-producing protein that is targeted to the tubulo-vesicular network of the forming cell plate during cytokinesis. Also plays a major role in plasma membrane maintenance and cell wall integrity with an implication in vesicular trafficking, polar cell expansion, and other aspects of plant growth and development. Has a GTPase activity. This Arabidopsis thaliana (Mouse-ear cress) protein is Phragmoplastin DRP1E.